A 465-amino-acid chain; its full sequence is Glutamate--tRNA ligase (465 aa).

The 'HIGH' region signature appears at 8–18 (PSPTGDLHIGG). A 'KMSKS' region motif is present at residues 235-239 (RLSKR). K238 contributes to the ATP binding site.

The protein belongs to the class-I aminoacyl-tRNA synthetase family. Glutamate--tRNA ligase type 1 subfamily. Monomer.

The protein resides in the cytoplasm. The catalysed reaction is tRNA(Glu) + L-glutamate + ATP = L-glutamyl-tRNA(Glu) + AMP + diphosphate. Its function is as follows. Catalyzes the attachment of glutamate to tRNA(Glu) in a two-step reaction: glutamate is first activated by ATP to form Glu-AMP and then transferred to the acceptor end of tRNA(Glu). The protein is Glutamate--tRNA ligase of Dichelobacter nodosus (strain VCS1703A).